The sequence spans 209 residues: Uracil phosphoribosyltransferase (209 aa).

Residues Arg79, Arg104, and 131–139 each bind 5-phospho-alpha-D-ribose 1-diphosphate; that span reads DPMLATGGS. Residues Ile194 and 199–201 each bind uracil; that span reads GDA. Residue Asp200 participates in 5-phospho-alpha-D-ribose 1-diphosphate binding.

This sequence belongs to the UPRTase family. The cofactor is Mg(2+).

It catalyses the reaction UMP + diphosphate = 5-phospho-alpha-D-ribose 1-diphosphate + uracil. The protein operates within pyrimidine metabolism; UMP biosynthesis via salvage pathway; UMP from uracil: step 1/1. Allosterically activated by GTP. Its function is as follows. Catalyzes the conversion of uracil and 5-phospho-alpha-D-ribose 1-diphosphate (PRPP) to UMP and diphosphate. The sequence is that of Uracil phosphoribosyltransferase from Streptococcus pyogenes serotype M1.